The primary structure comprises 480 residues: Bifunctional protein GlmU (480 aa).

Positions 1–247 are pyrophosphorylase; the sequence is MATPIDVVIM…AAQVAGVNSP (247 aa). Residues lysine 24, glutamine 86, 91–92, 113–115, glycine 150, glutamate 172, and asparagine 245 each bind UDP-N-acetyl-alpha-D-glucosamine; these read GT and SGD. Residue aspartate 115 coordinates Mg(2+). Asparagine 245 contacts Mg(2+). The interval 248 to 268 is linker; that stretch reads VQLAELERVYQLRQATALMEQ. The interval 269-480 is N-acetyltransferase; sequence GVRLADPARF…WKRPVKVSKG (212 aa). Arginine 355 and lysine 373 together coordinate UDP-N-acetyl-alpha-D-glucosamine. Histidine 385 (proton acceptor) is an active-site residue. Residues tyrosine 388 and asparagine 399 each coordinate UDP-N-acetyl-alpha-D-glucosamine. Acetyl-CoA is bound by residues alanine 402, 408–409, serine 427, glycine 445, and arginine 462; that span reads NY.

The protein in the N-terminal section; belongs to the N-acetylglucosamine-1-phosphate uridyltransferase family. In the C-terminal section; belongs to the transferase hexapeptide repeat family. As to quaternary structure, homotrimer. Mg(2+) serves as cofactor.

The protein localises to the cytoplasm. It catalyses the reaction alpha-D-glucosamine 1-phosphate + acetyl-CoA = N-acetyl-alpha-D-glucosamine 1-phosphate + CoA + H(+). The catalysed reaction is N-acetyl-alpha-D-glucosamine 1-phosphate + UTP + H(+) = UDP-N-acetyl-alpha-D-glucosamine + diphosphate. The protein operates within nucleotide-sugar biosynthesis; UDP-N-acetyl-alpha-D-glucosamine biosynthesis; N-acetyl-alpha-D-glucosamine 1-phosphate from alpha-D-glucosamine 6-phosphate (route II): step 2/2. It functions in the pathway nucleotide-sugar biosynthesis; UDP-N-acetyl-alpha-D-glucosamine biosynthesis; UDP-N-acetyl-alpha-D-glucosamine from N-acetyl-alpha-D-glucosamine 1-phosphate: step 1/1. It participates in bacterial outer membrane biogenesis; LPS lipid A biosynthesis. In terms of biological role, catalyzes the last two sequential reactions in the de novo biosynthetic pathway for UDP-N-acetylglucosamine (UDP-GlcNAc). The C-terminal domain catalyzes the transfer of acetyl group from acetyl coenzyme A to glucosamine-1-phosphate (GlcN-1-P) to produce N-acetylglucosamine-1-phosphate (GlcNAc-1-P), which is converted into UDP-GlcNAc by the transfer of uridine 5-monophosphate (from uridine 5-triphosphate), a reaction catalyzed by the N-terminal domain. The protein is Bifunctional protein GlmU of Polaromonas sp. (strain JS666 / ATCC BAA-500).